The chain runs to 540 residues: Kinesin light chain (540 aa).

The stretch at leucine 34–isoleucine 138 forms a coiled coil. TPR repeat units follow at residues leucine 206 to threonine 239, alanine 248 to cysteine 281, alanine 290 to valine 323, alanine 332 to lysine 365, alanine 374 to arginine 407, and threonine 456 to histidine 489.

This sequence belongs to the kinesin light chain family. As to quaternary structure, oligomeric complex composed of two heavy chains and two light chains. Interacts with unc-83; the interaction is direct. Interacts with unc-33; the interaction regulates unc-33 neurite localization. Interacts with casy-1.

It localises to the cytoplasm. The protein localises to the cytoskeleton. Its subcellular location is the nucleus envelope. In terms of biological role, kinesin is a microtubule-associated force-producing protein that may play a role in organelle transport. The light chain may function in coupling of cargo to the heavy chain or in the modulation of its ATPase activity. Recruits unc-83 (within the unc-83-unc-84 LINC complex) to the nuclear envelope during nuclear migration to mediate the link between the nuclear envelope and the microtubule cytoskeleton in hypodermal precursor cells. This Caenorhabditis elegans protein is Kinesin light chain.